Consider the following 260-residue polypeptide: Carbonic anhydrase 2 (260 aa).

Residue serine 2 is modified to N-acetylserine. Serine 2 carries the post-translational modification Phosphoserine. Positions 3–259 (HHWGYGKHNG…LKGRQVKASF (257 aa)) constitute an Alpha-carbonic anhydrase domain. Residue histidine 64 is the Proton donor/acceptor of the active site. Residues histidine 94, histidine 96, and histidine 119 each coordinate Zn(2+). A phosphoserine mark is found at serine 165 and serine 172. Residue 198–199 (TT) participates in substrate binding.

It belongs to the alpha-carbonic anhydrase family. Interacts with SLC4A4 and SLC26A6. Interaction with SLC4A7 regulates SLC4A7 transporter activity. It depends on Zn(2+) as a cofactor.

The protein localises to the cytoplasm. It localises to the cell membrane. The catalysed reaction is hydrogencarbonate + H(+) = CO2 + H2O. The enzyme catalyses urea = cyanamide + H2O. Inhibited by acetazolamide. Its function is as follows. Catalyzes the reversible hydration of carbon dioxide. Can also hydrate cyanamide to urea. Involved in the regulation of fluid secretion into the anterior chamber of the eye. Essential for bone resorption and osteoclast differentiation. Contributes to intracellular pH regulation in the duodenal upper villous epithelium during proton-coupled peptide absorption. Stimulates the chloride-bicarbonate exchange activity of SLC26A6. In Oryctolagus cuniculus (Rabbit), this protein is Carbonic anhydrase 2 (CA2).